The following is a 132-amino-acid chain: Small ribosomal subunit protein uS8 (132 aa).

It belongs to the universal ribosomal protein uS8 family. In terms of assembly, part of the 30S ribosomal subunit. Contacts proteins S5 and S12.

In terms of biological role, one of the primary rRNA binding proteins, it binds directly to 16S rRNA central domain where it helps coordinate assembly of the platform of the 30S subunit. This chain is Small ribosomal subunit protein uS8, found in Maricaulis maris (strain MCS10) (Caulobacter maris).